We begin with the raw amino-acid sequence, 328 residues long: ABC transporter I family member 20 (328 aa).

An ABC transporter domain is found at 14-257; it reads VEISGLRFTY…SKKSLMRTVE (244 aa). An ATP-binding site is contributed by 55–62; that stretch reads GSNGAGKT. A disordered region spans residues 263–295; that stretch reads ERDEERKRRKERKANGLPEFETRTEESRVTGDP. Residues 282 to 291 are compositionally biased toward basic and acidic residues; the sequence is FETRTEESRV.

This sequence belongs to the ABC transporter superfamily. ABCI family.

The protein localises to the cytoplasm. This chain is ABC transporter I family member 20 (ABCI20), found in Arabidopsis thaliana (Mouse-ear cress).